Consider the following 566-residue polypeptide: 3'-5' exoribonuclease parn-1 (566 aa).

A divalent metal cation-binding residues include aspartate 29, glutamate 31, aspartate 283, and aspartate 379.

This sequence belongs to the CAF1 family. The cofactor is a divalent metal cation. In terms of tissue distribution, expressed in germline cells.

It is found in the cytoplasm. Functionally, involved in transcriptome surveillance. Required for piwi-interacting RNAs (piRNAs) 3'-end trimming, which is important for both fertility and piRNA-directed gene silencing. Has 3' to 5' exonuclease activity in vitro. This chain is 3'-5' exoribonuclease parn-1, found in Caenorhabditis elegans.